Here is a 182-residue protein sequence, read N- to C-terminus: Protein GrpE (182 aa).

The interval 1-35 is disordered; the sequence is MTQENQTPPPEQENLAADPAVETTAETPAVKTPEQ.

Belongs to the GrpE family. In terms of assembly, homodimer.

It localises to the cytoplasm. In terms of biological role, participates actively in the response to hyperosmotic and heat shock by preventing the aggregation of stress-denatured proteins, in association with DnaK and GrpE. It is the nucleotide exchange factor for DnaK and may function as a thermosensor. Unfolded proteins bind initially to DnaJ; upon interaction with the DnaJ-bound protein, DnaK hydrolyzes its bound ATP, resulting in the formation of a stable complex. GrpE releases ADP from DnaK; ATP binding to DnaK triggers the release of the substrate protein, thus completing the reaction cycle. Several rounds of ATP-dependent interactions between DnaJ, DnaK and GrpE are required for fully efficient folding. This Polynucleobacter necessarius subsp. necessarius (strain STIR1) protein is Protein GrpE.